A 792-amino-acid chain; its full sequence is Phenylalanine--tRNA ligase beta subunit (792 aa).

The 112-residue stretch at 39–150 (GDEITNVVTG…ENTPIGKDIK (112 aa)) folds into the tRNA-binding domain. Residues 404–479 (SEPNIVEVDY…RIYGYNKVPS (76 aa)) enclose the B5 domain. The Mg(2+) site is built by aspartate 457, aspartate 463, glutamate 466, and glutamate 467. One can recognise an FDX-ACB domain in the interval 699 to 792 (PKFPTVTRDI…LEHVLGAELR (94 aa)).

It belongs to the phenylalanyl-tRNA synthetase beta subunit family. Type 1 subfamily. Tetramer of two alpha and two beta subunits. Mg(2+) serves as cofactor.

It is found in the cytoplasm. It catalyses the reaction tRNA(Phe) + L-phenylalanine + ATP = L-phenylalanyl-tRNA(Phe) + AMP + diphosphate + H(+). The protein is Phenylalanine--tRNA ligase beta subunit of Clostridium acetobutylicum (strain ATCC 824 / DSM 792 / JCM 1419 / IAM 19013 / LMG 5710 / NBRC 13948 / NRRL B-527 / VKM B-1787 / 2291 / W).